A 584-amino-acid chain; its full sequence is uncharacterized protein (584 aa).

A signal peptide spans 1 to 27 (MGLSRKKIFTWPLLLTGMAVVSTTFSS). C28 carries the N-palmitoyl cysteine lipid modification. Residue C28 is the site of S-diacylglycerol cysteine attachment. A disordered region spans residues 530–570 (NLPKKEGSTNQANQQTNQTNRSTDATKKDSSSDETNKNPLA). The span at 538 to 552 (TNQANQQTNQTNRST) shows a compositional bias: low complexity. Residues 553–565 (DATKKDSSSDETN) show a composition bias toward basic and acidic residues.

It belongs to the MG067/MG068/MG395 family.

The protein resides in the cell membrane. This is an uncharacterized protein from Mycoplasmoides gallisepticum (strain R(low / passage 15 / clone 2)) (Mycoplasma gallisepticum).